We begin with the raw amino-acid sequence, 569 residues long: Dolichol kinase EVAN (569 aa).

At 1-22 the chain is on the cytoplasmic side; it reads MKTTATSFVTGERVVVFVVVSR. The helical transmembrane segment at 23–43 threads the bilayer; it reads ILLSLPLSLISHGFSLFLLSL. At 44–67 the chain is on the lumenal side; that stretch reads SAFLVEIRVETSPFLLSHFSSRRG. The helical transmembrane segment at 68-88 threads the bilayer; sequence ASSGILLGAVTLPSVMISKLV. Residues 89–108 lie on the Cytoplasmic side of the membrane; that stretch reads QLSRAISIHEAEQDELAHVT. A helical membrane pass occupies residues 109–129; the sequence is MQYWAASASCCAILIYLSVIM. Over 130-147 the chain is Lumenal; the sequence is SQVRKDESLSSSSIWLTR. A helical transmembrane segment spans residues 148–168; it reads VSLTGTVLYGVACFVSLSMIS. The Cytoplasmic segment spans residues 169–178; sequence HTGLNTSLKM. The helical transmembrane segment at 179 to 199 threads the bilayer; the sequence is LWMLFHGLAAVKLIRHLLCTF. Residues 200–207 lie on the Lumenal side of the membrane; that stretch reads PSCASIGE. Residues 208–228 form a helical membrane-spanning segment; that stretch reads ALLVTSGLVLYFGDFLACTIA. The Cytoplasmic segment spans residues 229–252; it reads KIFEKLIPVDLVSISYGIKRTETG. A helical membrane pass occupies residues 253–273; the sequence is IIVQGLLLGLLLFPMVFRFVL. Over 274 to 296 the chain is Lumenal; that stretch reads HIYESSLRKRDARQRNCSDAAKS. A glycan (N-linked (GlcNAc...) asparagine) is linked at Asn-289. Residues 297-317 traverse the membrane as a helical segment; it reads VLFFVSLLFFMVVAVPSWMQF. The Cytoplasmic segment spans residues 318–340; the sequence is VHDFNQHPFLWVLTFVFSEPLKR. A helical membrane pass occupies residues 341–361; sequence LSLCIYWILLIVVSVSRFYNI. At 362–369 the chain is on the lumenal side; sequence SRSSKVER. Residues 370–390 form a helical membrane-spanning segment; it reads ILLRKYYHLMAVLMFLPALVL. Topologically, residues 391 to 393 are cytoplasmic; sequence QPK. A helical transmembrane segment spans residues 394 to 414; the sequence is FLDLAFGAALAVFVALEIIRI. The Lumenal portion of the chain corresponds to 415 to 440; the sequence is WRIQPLGEPLHQFMNAFTDHRDSEHL. Residues 441–461 form a helical membrane-spanning segment; it reads IVSHFSLLLGCALPIWMSSGF. Residues 462 to 464 are Cytoplasmic-facing; it reads NDR. A helical transmembrane segment spans residues 465–485; that stretch reads ALSPFAGILSLGIGDTMASMV. Over 486–508 the chain is Lumenal; it reads GHKYGVLRWSKTGKKTVEGTAAG. The CTP-binding stretch occupies residues 487–503; that stretch reads HKYGVLRWSKTGKKTVE. The helical transmembrane segment at 509–529 threads the bilayer; that stretch reads ITSMMAVCFVLVPILASMGYI. The Cytoplasmic portion of the chain corresponds to 530–548; that stretch reads LSQGWWSLLVAVTATGMLE. Residues 549–569 traverse the membrane as a helical segment; the sequence is AYTAQLDNAFIPLVFYSLLCL.

The protein belongs to the polyprenol kinase family.

It localises to the endoplasmic reticulum membrane. It catalyses the reaction a di-trans,poly-cis-dolichol + CTP = a di-trans,poly-cis-dolichyl phosphate + CDP + H(+). Functionally, essential for pollen development. Involved in protein N-glycosylation in the endoplasmic reticulum (ER), especially in the female gametophyte. Mediates pollen tube (PT) reception in synergids through protein glycosylation. The chain is Dolichol kinase EVAN from Arabidopsis thaliana (Mouse-ear cress).